Reading from the N-terminus, the 1468-residue chain is Centrosomal protein of 290 kDa (1468 aa).

7 coiled-coil regions span residues 1-25, 52-121, 172-292, 318-528, 559-592, 627-688, and 736-1441; these read ERQL…VGEK, SLSE…IEQA, KMYE…DEKA, VASK…EAQK, RIIL…ILSR, HTLK…QADN, and IKLK…SEQF. The segment at 1060 to 1468 is self-association (with itself or N-terminus); the sequence is TTGLTVDQVM…QENPVNFPIY (409 aa). Residues 1130–1152 are disordered; the sequence is LSKDAYSRPSTSGIDSDDHYQRE.

Part of the tectonic-like complex (also named B9 complex). Interacts with ATF4 via its N-terminal region. Associates with the BBSome complex, interacting (via N-terminus) with BBS4. Interacts with IQCB1/NPHP5; IQCB1 and CEP290/NPHP6 are proposed to form a functional NPHP5-6 module localized to the centrosome. Interacts with NPHP4; the interaction likely requires additional interactors. Interacts with ZNF423, FAM161A, CEP162, CEP162, CEP131, TALPID3, CCDC13, CC2D2A, RPGRIP1. Can self-associate (homo- or heteromeric). Interacts with CCP110; required for suppressing cilia formation. Interacts with RPGR. Associates (via C-terminus) with microtubules; association to microtubule is reduced in response to cellular stress, such as ultraviolet light (UV) radiation or heat shock, in a process that requires p38 MAP kinase signaling. Interacts with FAM161A. Interacts with PCM1. Interacts with CCDC66. Interacts with ARMC9 and CSPP1. In terms of processing, ubiquitinated. May undergo monoubiquitination; monoubiquitination is inhibited in response to cellular stress, such as ultraviolet light (UV) radiation or heat shock, but does not cause its displacement from centriolar satellites.

The protein localises to the cytoplasm. It localises to the cytoskeleton. It is found in the microtubule organizing center. Its subcellular location is the centrosome. The protein resides in the centriolar satellite. The protein localises to the nucleus. It localises to the cell projection. It is found in the cilium. Its subcellular location is the cilium basal body. The protein resides in the centriole. The protein localises to the cytoplasmic vesicle. Functionally, involved in early and late steps in cilia formation. Its association with CCP110 is required for inhibition of primary cilia formation by CCP110. May play a role in early ciliogenesis in the disappearance of centriolar satellites and in the transition of primary ciliar vesicles (PCVs) to capped ciliary vesicles (CCVs). Required for the centrosomal recruitment of RAB8A and for the targeting of centriole satellite proteins to centrosomes such as of PCM1. Required for the correct localization of ciliary and phototransduction proteins in retinal photoreceptor cells; may play a role in ciliary transport processes. Required for efficient recruitment of RAB8A to primary cilium. In the ciliary transition zone is part of the tectonic-like complex which is required for tissue-specific ciliogenesis and may regulate ciliary membrane composition. Involved in regulation of the BBSome complex integrity, specifically for presence of BBS2, BBS5 and BBS8/TTC8 in the complex, and in ciliary targeting of selected BBSome cargos. May play a role in controlling entry of the BBSome complex to cilia possibly implicating IQCB1/NPHP5. Activates ATF4-mediated transcription. The protein is Centrosomal protein of 290 kDa (CEP290) of Bos taurus (Bovine).